The primary structure comprises 786 residues: Endonuclease MutS2 (786 aa).

335–342 (GPNTGGKT) contributes to the ATP binding site. One can recognise a Smr domain in the interval 711–786 (LDLRGERFEN…GLGVTVVELK (76 aa)).

Belongs to the DNA mismatch repair MutS family. MutS2 subfamily. Homodimer. Binds to stalled ribosomes, contacting rRNA.

Its function is as follows. Endonuclease that is involved in the suppression of homologous recombination and thus may have a key role in the control of bacterial genetic diversity. Functionally, acts as a ribosome collision sensor, splitting the ribosome into its 2 subunits. Detects stalled/collided 70S ribosomes which it binds and splits by an ATP-hydrolysis driven conformational change. Acts upstream of the ribosome quality control system (RQC), a ribosome-associated complex that mediates the extraction of incompletely synthesized nascent chains from stalled ribosomes and their subsequent degradation. Probably generates substrates for RQC. This Bacillus cereus (strain ATCC 10987 / NRS 248) protein is Endonuclease MutS2.